A 397-amino-acid polypeptide reads, in one-letter code: DNA-directed RNA polymerase subunit Rpo1C (397 aa).

It belongs to the RNA polymerase beta' chain family. In terms of assembly, part of the RNA polymerase complex.

The protein localises to the cytoplasm. The catalysed reaction is RNA(n) + a ribonucleoside 5'-triphosphate = RNA(n+1) + diphosphate. Its function is as follows. DNA-dependent RNA polymerase (RNAP) catalyzes the transcription of DNA into RNA using the four ribonucleoside triphosphates as substrates. Forms part of the jaw domain. In Pyrococcus abyssi (strain GE5 / Orsay), this protein is DNA-directed RNA polymerase subunit Rpo1C.